The following is a 152-amino-acid chain: UPF0266 membrane protein PM0830 (152 aa).

3 helical membrane-spanning segments follow: residues 1–21 (MMII…YAFY), 45–65 (KDAL…YTNL), and 66–86 (SSAT…AAFI).

The protein belongs to the UPF0266 family.

The protein resides in the cell inner membrane. The sequence is that of UPF0266 membrane protein PM0830 from Pasteurella multocida (strain Pm70).